Reading from the N-terminus, the 247-residue chain is Probable membrane transporter protein y4hK (247 aa).

6 consecutive transmembrane segments (helical) span residues 5–25, 31–51, 74–94, 121–141, 202–222, and 227–247; these read AIGL…VGQA, IAAM…ALAL, VYPF…VHLP, SALV…ITGA, FLPW…LIGS, and ASWL…KLLW.

Belongs to the 4-toluene sulfonate uptake permease (TSUP) (TC 2.A.102) family.

Its subcellular location is the cell membrane. The protein is Probable membrane transporter protein y4hK of Sinorhizobium fredii (strain NBRC 101917 / NGR234).